The following is a 108-amino-acid chain: Small ribosomal subunit protein bS18c (108 aa).

2 stretches are compositionally biased toward basic residues: residues 1 to 19 (MDKS…RRRL) and 97 to 108 (RARKKKIGLLLN). 2 disordered regions span residues 1-23 (MDKS…PPIG) and 83-108 (QFER…LLLN).

The protein belongs to the bacterial ribosomal protein bS18 family. As to quaternary structure, part of the 30S ribosomal subunit.

Its subcellular location is the plastid. The protein localises to the chloroplast. This is Small ribosomal subunit protein bS18c from Illicium oligandrum (Star anise).